Reading from the N-terminus, the 430-residue chain is Serine hydroxymethyltransferase (430 aa).

(6S)-5,6,7,8-tetrahydrofolate-binding positions include leucine 123 and 127 to 129 (GHL). An N6-(pyridoxal phosphate)lysine modification is found at lysine 232. Residue glutamate 248 coordinates (6S)-5,6,7,8-tetrahydrofolate.

The protein belongs to the SHMT family. As to quaternary structure, homodimer. Pyridoxal 5'-phosphate is required as a cofactor.

The protein localises to the cytoplasm. It carries out the reaction (6R)-5,10-methylene-5,6,7,8-tetrahydrofolate + glycine + H2O = (6S)-5,6,7,8-tetrahydrofolate + L-serine. The protein operates within one-carbon metabolism; tetrahydrofolate interconversion. It functions in the pathway amino-acid biosynthesis; glycine biosynthesis; glycine from L-serine: step 1/1. Catalyzes the reversible interconversion of serine and glycine with tetrahydrofolate (THF) serving as the one-carbon carrier. This reaction serves as the major source of one-carbon groups required for the biosynthesis of purines, thymidylate, methionine, and other important biomolecules. Also exhibits THF-independent aldolase activity toward beta-hydroxyamino acids, producing glycine and aldehydes, via a retro-aldol mechanism. The polypeptide is Serine hydroxymethyltransferase (Anaplasma marginale (strain Florida)).